The following is a 351-amino-acid chain: Histidinol-phosphate aminotransferase (351 aa).

Residue Lys-221 is modified to N6-(pyridoxal phosphate)lysine.

Belongs to the class-II pyridoxal-phosphate-dependent aminotransferase family. Histidinol-phosphate aminotransferase subfamily. In terms of assembly, homodimer. Pyridoxal 5'-phosphate serves as cofactor.

The enzyme catalyses L-histidinol phosphate + 2-oxoglutarate = 3-(imidazol-4-yl)-2-oxopropyl phosphate + L-glutamate. It functions in the pathway amino-acid biosynthesis; L-histidine biosynthesis; L-histidine from 5-phospho-alpha-D-ribose 1-diphosphate: step 7/9. The chain is Histidinol-phosphate aminotransferase from Staphylococcus epidermidis (strain ATCC 35984 / DSM 28319 / BCRC 17069 / CCUG 31568 / BM 3577 / RP62A).